The primary structure comprises 349 residues: Carbamoyl phosphate synthase small chain (349 aa).

Positions 1-170 (MKAKLILENG…KYEISGEGKK (170 aa)) are CPSase. 3 residues coordinate L-glutamine: Ser45, Gly218, and Gly220. One can recognise a Glutamine amidotransferase type-1 domain in the interval 170 to 349 (KVAIIDFGIK…IFDEFMKYAL (180 aa)). Cys245 (nucleophile) is an active-site residue. 5 residues coordinate L-glutamine: Leu246, Gln249, Asn287, Gly289, and Tyr290. Catalysis depends on residues His327 and Glu329.

The protein belongs to the CarA family. In terms of assembly, composed of two chains; the small (or glutamine) chain promotes the hydrolysis of glutamine to ammonia, which is used by the large (or ammonia) chain to synthesize carbamoyl phosphate. Tetramer of heterodimers (alpha,beta)4.

It carries out the reaction hydrogencarbonate + L-glutamine + 2 ATP + H2O = carbamoyl phosphate + L-glutamate + 2 ADP + phosphate + 2 H(+). It catalyses the reaction L-glutamine + H2O = L-glutamate + NH4(+). It functions in the pathway amino-acid biosynthesis; L-arginine biosynthesis; carbamoyl phosphate from bicarbonate: step 1/1. Its pathway is pyrimidine metabolism; UMP biosynthesis via de novo pathway; (S)-dihydroorotate from bicarbonate: step 1/3. Small subunit of the glutamine-dependent carbamoyl phosphate synthetase (CPSase). CPSase catalyzes the formation of carbamoyl phosphate from the ammonia moiety of glutamine, carbonate, and phosphate donated by ATP, constituting the first step of 2 biosynthetic pathways, one leading to arginine and/or urea and the other to pyrimidine nucleotides. The small subunit (glutamine amidotransferase) binds and cleaves glutamine to supply the large subunit with the substrate ammonia. The sequence is that of Carbamoyl phosphate synthase small chain from Clostridium perfringens (strain 13 / Type A).